The primary structure comprises 283 residues: MELWYTEEHTDKVRFSIKVDEQLYSGKSDFQRIDVFKSQEFGTFFTLDGLMMVTEKDEFIYHDMIVHVPMATNPNIKNVLVIGAGDGGTVRELTRYETIEKIDMVEIDKLVVDVCREYLPQTANKLDDPRVSLFFEDGLKFVRSVENKYDLIIVDSTDPFGPGEGLFTREFYGNCFKALKEDGILVNQHESPYYEEYARGMKRAHKRIKECFPVCRVYQAHIPTYPSGHWLFGFASKKYDPLNANIEKWNDLGLKTKYYNTDLHKGCFALPNYVKEMLENVDE.

The PABS domain maps to 2-237; it reads ELWYTEEHTD…GHWLFGFASK (236 aa). Q31 serves as a coordination point for S-methyl-5'-thioadenosine. Spermidine contacts are provided by H62 and D86. S-methyl-5'-thioadenosine contacts are provided by residues E106 and 137–138; that span reads DG. D155 acts as the Proton acceptor in catalysis. A spermidine-binding site is contributed by 155–158; sequence DSTD. Position 162 (P162) interacts with S-methyl-5'-thioadenosine.

It belongs to the spermidine/spermine synthase family. Homodimer or homotetramer.

The protein localises to the cytoplasm. It carries out the reaction S-adenosyl 3-(methylsulfanyl)propylamine + putrescine = S-methyl-5'-thioadenosine + spermidine + H(+). The protein operates within amine and polyamine biosynthesis; spermidine biosynthesis; spermidine from putrescine: step 1/1. Its function is as follows. Catalyzes the irreversible transfer of a propylamine group from the amino donor S-adenosylmethioninamine (decarboxy-AdoMet) to putrescine (1,4-diaminobutane) to yield spermidine. In Clostridium perfringens (strain SM101 / Type A), this protein is Polyamine aminopropyltransferase.